A 126-amino-acid chain; its full sequence is Large ribosomal subunit protein eL8 (126 aa).

This sequence belongs to the eukaryotic ribosomal protein eL8 family. Part of the 50S ribosomal subunit. Probably part of the RNase P complex.

Its subcellular location is the cytoplasm. Functionally, multifunctional RNA-binding protein that recognizes the K-turn motif in ribosomal RNA, the RNA component of RNase P, box H/ACA, box C/D and box C'/D' sRNAs. This chain is Large ribosomal subunit protein eL8, found in Sulfolobus acidocaldarius (strain ATCC 33909 / DSM 639 / JCM 8929 / NBRC 15157 / NCIMB 11770).